We begin with the raw amino-acid sequence, 220 residues long: Protein LURP-one-related 12 (220 aa).

This sequence belongs to the LOR family.

Its function is as follows. Might be related to the phospholipid scramblase and tubby-like superfamily of membrane tethered transcription factors. The chain is Protein LURP-one-related 12 from Arabidopsis thaliana (Mouse-ear cress).